We begin with the raw amino-acid sequence, 118 residues long: Urease subunit beta (118 aa).

This sequence belongs to the urease beta subunit family. In terms of assembly, heterotrimer of UreA (gamma), UreB (beta) and UreC (alpha) subunits. Three heterotrimers associate to form the active enzyme.

It is found in the cytoplasm. The catalysed reaction is urea + 2 H2O + H(+) = hydrogencarbonate + 2 NH4(+). It participates in nitrogen metabolism; urea degradation; CO(2) and NH(3) from urea (urease route): step 1/1. The protein is Urease subunit beta of Aliivibrio fischeri (strain ATCC 700601 / ES114) (Vibrio fischeri).